The sequence spans 192 residues: UPF0301 protein Bcep1808_0798 (192 aa).

The protein belongs to the UPF0301 (AlgH) family.

The chain is UPF0301 protein Bcep1808_0798 from Burkholderia vietnamiensis (strain G4 / LMG 22486) (Burkholderia cepacia (strain R1808)).